Consider the following 39-residue polypeptide: Photosystem II reaction center protein Y (39 aa).

The helical transmembrane segment at 4–22 (TLVVFAPIIAALAWVIFNI) threads the bilayer.

The protein belongs to the PsbY family. In terms of assembly, PSII is composed of 1 copy each of membrane proteins PsbA, PsbB, PsbC, PsbD, PsbE, PsbF, PsbH, PsbI, PsbJ, PsbK, PsbL, PsbM, PsbT, PsbX, PsbY, Psb30/Ycf12, peripheral proteins PsbO, CyanoQ (PsbQ), PsbU, PsbV and a large number of cofactors. It forms dimeric complexes.

Its subcellular location is the cellular thylakoid membrane. Its function is as follows. Loosely associated component of the core of photosystem II (PSII), it is not always seen in crystals. PSII is a light-driven water plastoquinone oxidoreductase, using light energy to abstract electrons from H(2)O, generating a proton gradient subsequently used for ATP formation. The protein is Photosystem II reaction center protein Y of Prochlorococcus marinus (strain MIT 9515).